The chain runs to 198 residues: Probable GTP-binding protein EngB (198 aa).

In terms of domain architecture, EngB-type G spans 27 to 198 (DLPEVALAGR…ESWDTILSEL (172 aa)). GTP contacts are provided by residues 35 to 42 (GRSNVGKS), 62 to 66 (GKTQL), 80 to 83 (DVPG), 147 to 150 (TKAD), and 179 to 181 (FSS). The Mg(2+) site is built by S42 and T64.

It belongs to the TRAFAC class TrmE-Era-EngA-EngB-Septin-like GTPase superfamily. EngB GTPase family. Mg(2+) is required as a cofactor.

Its function is as follows. Necessary for normal cell division and for the maintenance of normal septation. This is Probable GTP-binding protein EngB from Streptococcus agalactiae serotype III (strain NEM316).